Here is a 534-residue protein sequence, read N- to C-terminus: Protein tweety homolog 2 (534 aa).

The Extracellular segment spans residues 1–44; the sequence is MAAARVEYIAPWWVYWLHNFPHVDLSLRQKSPDFNPKDPGYQQT. The helical transmembrane segment at 45–65 threads the bilayer; that stretch reads LLFVALIVALCAAVNLLFVSV. Over 66-87 the chain is Cytoplasmic; it reads YLICLCCCKKEDETETKKTSSC. The helical transmembrane segment at 88-108 threads the bilayer; sequence CVTWTAAVSGLLCCAAVGIGF. Residues 109 to 213 lie on the Extracellular side of the membrane; sequence YGNSETNDGV…QTSTIEYYRW (105 aa). Ca(2+) is bound by residues Glu113 and Asp116. N-linked (GlcNAc...) asparagine glycosylation occurs at Asn129. Positions 164 to 166 match the RGD motif; it reads RGD. Asn197 carries N-linked (GlcNAc...) asparagine glycosylation. Residues 214–234 traverse the membrane as a helical segment; it reads LSYLLLFISYVVICLVTCVGL. Residues 235–240 are Cytoplasmic-facing; that stretch reads AKKSKC. The helical transmembrane segment at 241 to 261 threads the bilayer; that stretch reads LLLIMLCFGLIALMLSWTSLA. Over 262–388 the chain is Extracellular; sequence LETSSAMGTS…IGICYDGVEG (127 aa). Disulfide bonds link Cys274/Cys382 and Cys300/Cys367. Residues Asn283 and Asn352 are each glycosylated (N-linked (GlcNAc...) asparagine). A helical membrane pass occupies residues 389 to 409; that stretch reads MLYLGLFSLLAALAFTAMVCA. The Cytoplasmic segment spans residues 410 to 534; it reads MPQAWKHLEA…SSIYSNVFPA (125 aa).

The protein belongs to the tweety family. In terms of assembly, forms cis-homodimers in the presence of Ca(+2) and forms monomers and trans-dimers in the absence of Ca(2+).

The protein resides in the cell membrane. It catalyses the reaction chloride(in) = chloride(out). It carries out the reaction L-glutamate(out) = L-glutamate(in). Functionally, may act as a calcium-independent, swelling-dependent volume-regulated anion channel (VRAC-swell) which plays a pivotal role in the process of regulatory volume decrease (RVD) in the brain through the efflux of anions like chloride and organic osmolytes like glutamate. Probable large-conductance Ca(2+)-activated chloride channel. This chain is Protein tweety homolog 2 (ttyh2), found in Xenopus tropicalis (Western clawed frog).